A 311-amino-acid chain; its full sequence is MKVAVIGAAGGIGQALALLLKNRLPAGSDLALYDIAPVTPGVAADLSHIPTPVSIKGYCGEDPTPALEGADVVLISAGVARKPGMDRSDLFNINAGIVKSLAEKIAVTCPKACIGIITNPVNTTVAIAAEVLKKAGVYDKNKLFGVTTLDVIRSETFVAELKGKNPGEICVPVIGGHSGVTILPLLSQVEGVEFTAEEVAALTPRIQNAGTEVVEAKAGGGSATLSMGQAACRFGLSLVKALSGEKGVVECAYVEGNGEHARFFAQPILLGKNGVEEIQHYGELSTFEQDALDSMLDTLKADIKIGEEFIK.

NAD(+) is bound by residues 7 to 13 (GAAGGIG) and D34. 2 residues coordinate substrate: R81 and R87. Residues N94 and 117 to 119 (ITN) each bind NAD(+). Residues N119 and R153 each coordinate substrate. The active-site Proton acceptor is the H177. M227 lines the NAD(+) pocket.

It belongs to the LDH/MDH superfamily. MDH type 1 family. In terms of assembly, homodimer.

The enzyme catalyses (S)-malate + NAD(+) = oxaloacetate + NADH + H(+). Its function is as follows. Catalyzes the reversible oxidation of malate to oxaloacetate. The protein is Malate dehydrogenase of Aliivibrio salmonicida (strain LFI1238) (Vibrio salmonicida (strain LFI1238)).